The following is a 188-amino-acid chain: MASYGMNDVKNGMKILVNAEPAVITDTEYVKPGKGQAFTRVKYRLIKSGRVQEVTMKSTDTLEAADVVDTDMQYLYSDGEYWHFMQQETFEQVQADKNGMGGAEKWLKGEEQCVVTLWNGVPIGVQPPNFVELKITETDPGLRGDTSGGGGKPATLETGAVVRVPLFVNQDEVIKVDTRSGEYVSRVK.

Lys-34 is subject to N6-(3,6-diaminohexanoyl)-5-hydroxylysine.

Belongs to the elongation factor P family. May be beta-lysylated on the epsilon-amino group of Lys-34 by the combined action of EpmA and EpmB, and then hydroxylated on the C5 position of the same residue by EpmC (if this protein is present). Lysylation is critical for the stimulatory effect of EF-P on peptide-bond formation. The lysylation moiety may extend toward the peptidyltransferase center and stabilize the terminal 3-CCA end of the tRNA. Hydroxylation of the C5 position on Lys-34 may allow additional potential stabilizing hydrogen-bond interactions with the P-tRNA.

Its subcellular location is the cytoplasm. The protein operates within protein biosynthesis; polypeptide chain elongation. Involved in peptide bond synthesis. Alleviates ribosome stalling that occurs when 3 or more consecutive Pro residues or the sequence PPG is present in a protein, possibly by augmenting the peptidyl transferase activity of the ribosome. Modification of Lys-34 is required for alleviation. The sequence is that of Elongation factor P from Xylella fastidiosa (strain M23).